A 379-amino-acid chain; its full sequence is NADH-quinone oxidoreductase subunit D 2 (379 aa).

Belongs to the complex I 49 kDa subunit family. As to quaternary structure, NDH-1 is composed of 14 different subunits. Subunits NuoB, C, D, E, F, and G constitute the peripheral sector of the complex.

It localises to the cell inner membrane. The enzyme catalyses a quinone + NADH + 5 H(+)(in) = a quinol + NAD(+) + 4 H(+)(out). Functionally, NDH-1 shuttles electrons from NADH, via FMN and iron-sulfur (Fe-S) centers, to quinones in the respiratory chain. The immediate electron acceptor for the enzyme in this species is believed to be ubiquinone. Couples the redox reaction to proton translocation (for every two electrons transferred, four hydrogen ions are translocated across the cytoplasmic membrane), and thus conserves the redox energy in a proton gradient. This Anaeromyxobacter dehalogenans (strain 2CP-C) protein is NADH-quinone oxidoreductase subunit D 2.